We begin with the raw amino-acid sequence, 476 residues long: Abscisic acid 8'-hydroxylase CYP707A1 (476 aa).

Residues F5 to F25 traverse the membrane as a helical segment. C422 is a heme binding site.

Belongs to the cytochrome P450 family. The cofactor is heme. In terms of tissue distribution, expressed in ovaries (specifically in ovules and placenta), sepals, petals and pedicels.

Its subcellular location is the membrane. The catalysed reaction is 2-cis-(+)-abscisate + reduced [NADPH--hemoprotein reductase] + O2 = (+)-8'-hydroxyabscisate + oxidized [NADPH--hemoprotein reductase] + H2O + H(+). The protein operates within plant hormone degradation; abscisic acid degradation. Involved in the oxidative degradation of abscisic acid, especially in pollinated ovaries. This chain is Abscisic acid 8'-hydroxylase CYP707A1, found in Solanum lycopersicum (Tomato).